Here is a 262-residue protein sequence, read N- to C-terminus: MKGSEKITVVACYDYSMAALCDGADMLLVGDSAGMVVLGYDSTTRVTMDEMCLFTGAVSRGRKDSMVVGDLPFMSYQACTADAIRNSGRLVRAGADAVKLEGGAAVADAVRGVTGAGIPVMGHIGLLPQTAALSGGYRVQGRTRESALRLAEDAKALEEAGAFAIVLEMVAEEAARMVTKSVGVPTIGIGSGAGCDGQVLVLHDMLGLYGRFRPKFAKVYADLSGEVAGAVAGFKAEVESSQFPRPENSFYMDAGEADGLDR.

Mg(2+)-binding residues include Asp31 and Asp70. 3-methyl-2-oxobutanoate is bound by residues 31-32, Asp70, and Lys99; that span reads DS. Glu101 serves as a coordination point for Mg(2+). Glu168 (proton acceptor) is an active-site residue.

The protein belongs to the PanB family. Homodecamer; pentamer of dimers. Requires Mg(2+) as cofactor.

The protein localises to the cytoplasm. It catalyses the reaction 3-methyl-2-oxobutanoate + (6R)-5,10-methylene-5,6,7,8-tetrahydrofolate + H2O = 2-dehydropantoate + (6S)-5,6,7,8-tetrahydrofolate. It functions in the pathway cofactor biosynthesis; coenzyme A biosynthesis. Functionally, catalyzes the reversible reaction in which hydroxymethyl group from 5,10-methylenetetrahydrofolate is transferred onto alpha-ketoisovalerate to form ketopantoate. The protein is 3-methyl-2-oxobutanoate hydroxymethyltransferase of Cenarchaeum symbiosum (strain A).